The chain runs to 626 residues: Polyphenol oxidase C, chloroplastic (626 aa).

A chloroplast-targeting transit peptide spans 1–83; that stretch reads MASLCSNSST…ANAIPLAASA (83 aa). 2 disulfides stabilise this stretch: Cys-94-Cys-110 and Cys-109-Cys-177. Cu cation contacts are provided by His-176, His-194, His-203, His-324, His-328, and His-366. The segment at residues 180-194 is a cross-link (2'-(S-cysteinyl)-histidine (Cys-His)); the sequence is CNGGYSIDGKVLQVH.

Belongs to the tyrosinase family. It depends on Cu(2+) as a cofactor.

The protein localises to the plastid. Its subcellular location is the chloroplast thylakoid lumen. It catalyses the reaction 2 catechol + O2 = 2 1,2-benzoquinone + 2 H2O. In terms of biological role, catalyzes the oxidation of mono- and o-diphenols to o-diquinones. The chain is Polyphenol oxidase C, chloroplastic from Solanum lycopersicum (Tomato).